The chain runs to 335 residues: SLAM family member 7 (335 aa).

The N-terminal stretch at 1-22 (MAGSPTCLTLIYILWQLTGSAA) is a signal peptide. One can recognise an Ig-like V-type domain in the interval 23–124 (SGPVKELVGS…PSTQEYVLHV (102 aa)). The Extracellular portion of the chain corresponds to 23-226 (SGPVKELVGS…GAADDPDSSM (204 aa)). N-linked (GlcNAc...) asparagine glycosylation is found at N98, N142, N148, N172, N176, and N204. The Ig-like C2-type domain occupies 131 to 206 (PKVTMGLQSN…ARNPVSRNFS (76 aa)). 2 disulfides stabilise this stretch: C145–C215 and C151–C195. A helical membrane pass occupies residues 227–247 (VLLCLLLVPLLLSLFVLGLFL). Residues 248–335 (WFLKRERQEE…PRLFAYENVI (88 aa)) lie on the Cytoplasmic side of the membrane. Positions 278–296 (SGENTEYDTIPHTNRTILK) are interaction with FYN when phosphorylated at Tyr-284. Positions 302 to 307 (TVYSTV) match the ITSM motif.

As to quaternary structure, isoform 1 binds to SH2D1A when its cytoplasmic tail is phosphorylated in the presence of FYN (in vitro); low affinity binding, the physiological relevance of the interaction is questioned. Interacts with SH2D1B; in NK cells. Interacts (via ITSM phosphorylated on Tyr-302) with SH2D1B, PTPN6/SHP-1, PTPN11/SHP-2, INPP5D/SHIP1, CSK and FYN. Expressed in spleen, lymph node, peripheral blood leukocytes, bone marrow, small intestine, stomach, appendix, lung and trachea. Expression was detected in NK cells, activated B-cells, NK-cell line but not in promyelocytic, B-, or T-cell lines. Expressed in monocytes. Isoform 3 is expressed at much lower level than isoform 1.

The protein localises to the membrane. Self-ligand receptor of the signaling lymphocytic activation molecule (SLAM) family. SLAM receptors triggered by homo- or heterotypic cell-cell interactions are modulating the activation and differentiation of a wide variety of immune cells and thus are involved in the regulation and interconnection of both innate and adaptive immune response. Activities are controlled by presence or absence of small cytoplasmic adapter proteins, SH2D1A/SAP and/or SH2D1B/EAT-2. Isoform 1 mediates NK cell activation through a SH2D1A-independent extracellular signal-regulated ERK-mediated pathway. Positively regulates NK cell functions by a mechanism dependent on phosphorylated SH2D1B. Downstream signaling implicates PLCG1, PLCG2 and PI3K. In addition to heterotypic NK cells-target cells interactions also homotypic interactions between NK cells may contribute to activation. However, in the absence of SH2D1B, inhibits NK cell function. Also acts inhibitory in T-cells. May play a role in lymphocyte adhesion. In LPS-activated monocytes negatively regulates production of pro-inflammatory cytokines. In terms of biological role, isoform 3 does not mediate any NK cell activation. The polypeptide is SLAM family member 7 (SLAMF7) (Homo sapiens (Human)).